Reading from the N-terminus, the 728-residue chain is Catalase-peroxidase (728 aa).

Residues 91-218 (WHSAGTYRIA…LAAVQMGLIY (128 aa)) constitute a cross-link (tryptophyl-tyrosyl-methioninium (Trp-Tyr) (with M-244)). Histidine 92 serves as the catalytic Proton acceptor. The segment at residues 218–244 (YVNPEGPDGNPDPVAAARDIRETFARM) is a cross-link (tryptophyl-tyrosyl-methioninium (Tyr-Met) (with W-91)). Histidine 259 is a binding site for heme b.

It belongs to the peroxidase family. Peroxidase/catalase subfamily. As to quaternary structure, homodimer or homotetramer. The cofactor is heme b. Formation of the three residue Trp-Tyr-Met cross-link is important for the catalase, but not the peroxidase activity of the enzyme.

It catalyses the reaction H2O2 + AH2 = A + 2 H2O. It carries out the reaction 2 H2O2 = O2 + 2 H2O. Functionally, bifunctional enzyme with both catalase and broad-spectrum peroxidase activity. The polypeptide is Catalase-peroxidase (Burkholderia multivorans (strain ATCC 17616 / 249)).